Here is a 239-residue protein sequence, read N- to C-terminus: Small ribosomal subunit protein uS2 (239 aa).

This sequence belongs to the universal ribosomal protein uS2 family.

In Prochlorococcus marinus (strain MIT 9303), this protein is Small ribosomal subunit protein uS2.